Here is a 93-residue protein sequence, read N- to C-terminus: HssA/B-like protein 23 (93 aa).

It belongs to the hssA/B family.

In Dictyostelium discoideum (Social amoeba), this protein is HssA/B-like protein 23 (hssl23).